The sequence spans 37 residues: Large ribosomal subunit protein bL36 (37 aa).

The protein belongs to the bacterial ribosomal protein bL36 family.

In Fusobacterium nucleatum subsp. nucleatum (strain ATCC 25586 / DSM 15643 / BCRC 10681 / CIP 101130 / JCM 8532 / KCTC 2640 / LMG 13131 / VPI 4355), this protein is Large ribosomal subunit protein bL36 (rpmJ).